The primary structure comprises 120 residues: Alanine racemase (120 aa).

Tyrosine 24 (proton acceptor; specific for L-alanine) is an active-site residue.

It belongs to the alanine racemase family. In terms of assembly, homodimer. It depends on pyridoxal 5'-phosphate as a cofactor.

The catalysed reaction is L-alanine = D-alanine. Highly specific to D- and L-alanine and does not catalyze the racemization of other amino acids. This is Alanine racemase from Penaeus monodon (Giant tiger prawn).